The chain runs to 308 residues: Ornithine carbamoyltransferase (308 aa).

Residues Ser-55 to Thr-58, Gln-82, Arg-106, and His-133 to Gln-136 each bind carbamoyl phosphate. Residues Asn-164, Asp-227, and Ser-231 to Met-232 each bind L-ornithine. Residues Cys-267 to Leu-268 and Arg-295 contribute to the carbamoyl phosphate site.

This sequence belongs to the aspartate/ornithine carbamoyltransferase superfamily. OTCase family.

It is found in the cytoplasm. The catalysed reaction is carbamoyl phosphate + L-ornithine = L-citrulline + phosphate + H(+). The protein operates within amino-acid biosynthesis; L-arginine biosynthesis; L-arginine from L-ornithine and carbamoyl phosphate: step 1/3. Its function is as follows. Reversibly catalyzes the transfer of the carbamoyl group from carbamoyl phosphate (CP) to the N(epsilon) atom of ornithine (ORN) to produce L-citrulline. This chain is Ornithine carbamoyltransferase, found in Prochlorococcus marinus (strain MIT 9312).